Reading from the N-terminus, the 499-residue chain is UTP--glucose-1-phosphate uridylyltransferase (499 aa).

Residue S2 is modified to N-acetylserine. Position 17 is a phosphoserine (S17). T19 bears the Phosphothreonine mark. S21 and S79 each carry phosphoserine. UTP-binding positions include 109 to 112, K123, Q186, and G215; that span reads LNGG. A substrate-binding site is contributed by 111–112; sequence GG. K123 serves as a coordination point for Mg(2+). Substrate is bound by residues H216 and 244 to 246; that span reads NGD. UTP is bound at residue D246. D246 is a binding site for Mg(2+). The residue at position 369 (R369) is an Omega-N-methylarginine. K388 contacts UTP. K388 is a catalytic residue. An oligomerization region spans residues 448–499; it reads HLTITGNVFLGKDVTLRGTVIIVCSDGHKIDIPNGSILENVVVTGNLQILEH.

This sequence belongs to the UDPGP type 1 family. Homooctamer.

It carries out the reaction alpha-D-glucose 1-phosphate + UTP + H(+) = UDP-alpha-D-glucose + diphosphate. Functionally, plays a central role as a glucosyl donor in cellular metabolic pathways. The chain is UTP--glucose-1-phosphate uridylyltransferase from Saccharomyces cerevisiae (strain ATCC 204508 / S288c) (Baker's yeast).